The primary structure comprises 189 residues: Molybdenum cofactor guanylyltransferase (189 aa).

Residues 10–12 (LAG), lysine 23, asparagine 51, aspartate 69, and aspartate 99 contribute to the GTP site. Residue aspartate 99 coordinates Mg(2+).

This sequence belongs to the MobA family. Monomer. Requires Mg(2+) as cofactor.

Its subcellular location is the cytoplasm. The catalysed reaction is Mo-molybdopterin + GTP + H(+) = Mo-molybdopterin guanine dinucleotide + diphosphate. Functionally, transfers a GMP moiety from GTP to Mo-molybdopterin (Mo-MPT) cofactor (Moco or molybdenum cofactor) to form Mo-molybdopterin guanine dinucleotide (Mo-MGD) cofactor. The polypeptide is Molybdenum cofactor guanylyltransferase (Pasteurella multocida (strain Pm70)).